The primary structure comprises 39 residues: Putative beta-neurotoxin (39 aa).

The disordered stretch occupies residues 1–39; that stretch reads GGKEGYPLNSSNGCKSGRFAGTNSNENTECKGXDAENGY. In terms of domain architecture, LCN-type CS-alpha/beta spans 3 to 39; it reads KEGYPLNSSNGCKSGRFAGTNSNENTECKGXDAENGY. The span at 28-39 shows a compositional bias: basic and acidic residues; sequence TECKGXDAENGY.

This sequence belongs to the long (4 C-C) scorpion toxin superfamily. Sodium channel inhibitor family. Beta subfamily. As to expression, expressed by the venom gland.

It is found in the secreted. In terms of biological role, beta toxins bind voltage-independently at site-4 of sodium channels (Nav) and shift the voltage of activation toward more negative potentials thereby affecting sodium channel activation and promoting spontaneous and repetitive firing. This chain is Putative beta-neurotoxin, found in Tityus pachyurus (Colombian scorpion).